Here is a 70-residue protein sequence, read N- to C-terminus: Putative venom toxin Ts29 (70 aa).

The N-terminal stretch at 1–20 (MSPLFVVLLIATTTFYHSDA) is a signal peptide.

Expressed by the venom gland.

It localises to the secreted. The polypeptide is Putative venom toxin Ts29 (Tityus serrulatus (Brazilian scorpion)).